Reading from the N-terminus, the 287-residue chain is 1-acyl-sn-glycerol-3-phosphate acyltransferase alpha (287 aa).

An N-terminal signal peptide occupies residues 1 to 26 (MELWPGAGTLLLLLFLLLLLLLPTLW). The Lumenal segment spans residues 27 to 37 (FCSPSAKYFFK). A helical membrane pass occupies residues 38–58 (MAFYNGWILFLAVLAIPVCAV). Topologically, residues 59-127 (RGRNVENMKI…PGHCVPIAKR (69 aa)) are cytoplasmic. The HXXXXD motif signature appears at 104-109 (HQSSLD). The chain crosses the membrane as a helical span at residues 128-148 (ELLWAGSAGLACWLAGVIFID). The Lumenal segment spans residues 149–192 (RKRTGDAISVMSEVAQTLLTQDVRVWVFPEGTRNHNGSMLPFKR). Positions 178-181 (EGTR) match the EGTR motif motif.

The protein belongs to the 1-acyl-sn-glycerol-3-phosphate acyltransferase family.

It is found in the endoplasmic reticulum membrane. The enzyme catalyses a 1-acyl-sn-glycero-3-phosphate + an acyl-CoA = a 1,2-diacyl-sn-glycero-3-phosphate + CoA. It catalyses the reaction 1-(9Z-octadecenoyl)-sn-glycero-3-phosphate + (9Z)-octadecenoyl-CoA = 1,2-di-(9Z-octadecenoyl)-sn-glycero-3-phosphate + CoA. The catalysed reaction is 1-(9Z-octadecenoyl)-sn-glycero-3-phosphate + hexadecanoyl-CoA = 1-(9Z)-octadecenoyl-2-hexadecanoyl-sn-glycero-3-phosphate + CoA. It carries out the reaction heptadecanoyl-CoA + 1-(9Z-octadecenoyl)-sn-glycero-3-phosphate = 1-(9Z)-octadecenoyl-2-heptadecanoyl-sn-glycero-3-phosphate + CoA. The enzyme catalyses 1-(9Z-octadecenoyl)-sn-glycero-3-phosphate + octadecanoyl-CoA = 1-(9Z-octadecenoyl)-2-octadecanoyl-sn-glycero-3-phosphate + CoA. It catalyses the reaction 1-(9Z-octadecenoyl)-sn-glycero-3-phosphate + (9Z,12Z)-octadecadienoyl-CoA = 1-(9Z)-octadecenoyl-2-(9Z,12Z)-octadecadienoyl-sn-glycero-3-phosphate + CoA. The catalysed reaction is 1-(9Z-octadecenoyl)-sn-glycero-3-phosphate + tetradecanoyl-CoA = 1-(9Z)-octadecenoyl-2-tetradecanoyl-sn-glycero-3-phosphate + CoA. It carries out the reaction pentadecanoyl-CoA + 1-(9Z-octadecenoyl)-sn-glycero-3-phosphate = 1-(9Z)-octadecenoyl-2-pentadecanoyl-sn-glycero-3-phosphate + CoA. The enzyme catalyses 1-hexadecanoyl-sn-glycero-3-phosphate + (9Z)-octadecenoyl-CoA = 1-hexadecanoyl-2-(9Z-octadecenoyl)-sn-glycero-3-phosphate + CoA. It catalyses the reaction 1-(9Z,12Z,15Z)-octadecatrienoyl-sn-glycero-3-phosphate + (9Z)-octadecenoyl-CoA = 1-(9Z,12Z,15Z)-octadecatrienoyl-2-(9Z)-octadecenoyl-sn-glycero-3-phosphate + CoA. The catalysed reaction is 1-(6Z,9Z,12Z-octadecatrienoyl)-sn-glycero-3-phosphate + (9Z)-octadecenoyl-CoA = (6Z,9Z,12Z)-octadecatrienoyl-2-(9Z)-octadecenoyl-sn-glycero-3-phosphate + CoA. It carries out the reaction 1-eicosanoyl-sn-glycero-3-phosphate + (9Z)-octadecenoyl-CoA = 1-eicosanoyl-2-(9Z)-octadecenoyl-sn-glycero-3-phosphate + CoA. The enzyme catalyses 1-tetradecanoyl-sn-glycerol 3-phosphate + (9Z)-octadecenoyl-CoA = 1-tetradecanoyl-2-(9Z)-octadecenoyl-sn-glycero-3-phosphate + CoA. It catalyses the reaction 1-(9Z-octadecenoyl)-sn-glycero-3-phosphate + (5Z,8Z,11Z,14Z)-eicosatetraenoyl-CoA = 1-(9Z)-octadecenoyl-2-(5Z,8Z,11Z,14Z)-eicosatetraenoyl-sn-glycero-3-phosphate + CoA. The catalysed reaction is 1-(9Z-octadecenoyl)-sn-glycero-3-phosphate + dodecanoyl-CoA = 1-(9Z)-octadecenoyl-2-dodecanoyl-sn-glycero-3-phosphate + CoA. It carries out the reaction (6Z)-octadecenoyl-CoA + 1-(9Z-octadecenoyl)-sn-glycero-3-phosphate = 1-(9Z)-octadecenoyl-2-(6Z)-octadecenoyl-sn-glycero-3-phosphate + CoA. The enzyme catalyses (11Z)-octadecenoyl-CoA + 1-(9Z-octadecenoyl)-sn-glycero-3-phosphate = 1-(9Z)-octadecenoyl-2-(11Z)-octadecenoyl-sn-glycero-3-phosphate + CoA. It catalyses the reaction (9Z)-hexadecenoyl-CoA + 1-(9Z-octadecenoyl)-sn-glycero-3-phosphate = 1-(9Z-octadecenoyl)-2-(9Z-hexadecenoyl)-sn-glycero-3-phosphate + CoA. It functions in the pathway phospholipid metabolism; CDP-diacylglycerol biosynthesis; CDP-diacylglycerol from sn-glycerol 3-phosphate: step 2/3. Converts 1-acyl-sn-glycerol-3-phosphate (lysophosphatidic acid or LPA) into 1,2-diacyl-sn-glycerol-3-phosphate (phosphatidic acid or PA) by incorporating an acyl moiety at the sn-2 position of the glycerol backbone. The chain is 1-acyl-sn-glycerol-3-phosphate acyltransferase alpha (AGPAT1) from Ovis aries (Sheep).